Reading from the N-terminus, the 212-residue chain is Peptide methionine sulfoxide reductase MsrA (212 aa).

Residue C52 is part of the active site.

It belongs to the MsrA Met sulfoxide reductase family.

It carries out the reaction L-methionyl-[protein] + [thioredoxin]-disulfide + H2O = L-methionyl-(S)-S-oxide-[protein] + [thioredoxin]-dithiol. The enzyme catalyses [thioredoxin]-disulfide + L-methionine + H2O = L-methionine (S)-S-oxide + [thioredoxin]-dithiol. Functionally, has an important function as a repair enzyme for proteins that have been inactivated by oxidation. Catalyzes the reversible oxidation-reduction of methionine sulfoxide in proteins to methionine. In Escherichia coli O127:H6 (strain E2348/69 / EPEC), this protein is Peptide methionine sulfoxide reductase MsrA.